Consider the following 147-residue polypeptide: Probable flagellum biosynthesis repressor protein FlbT (147 aa).

The protein belongs to the FlbT family.

Has a post-transcriptional repressor function in flagellum biogenesis. Associates with the 5'-UTR of fljK mRNA and promotes its degradation. This Mesorhizobium japonicum (strain LMG 29417 / CECT 9101 / MAFF 303099) (Mesorhizobium loti (strain MAFF 303099)) protein is Probable flagellum biosynthesis repressor protein FlbT.